The chain runs to 183 residues: Capsid protein (183 aa).

Positions asparagine 136–cysteine 183 are disordered. A compositionally biased stretch (basic residues) spans valine 149–serine 176. Serine 155, serine 162, and serine 170 each carry phosphoserine; by host. The 1; half-length repeat unit spans residues serine 155–proline 161. The interval serine 155–glutamine 177 is 3 X 8 AA repeats of S-P-R-R-R-[PR]-S-Q. Positions arginine 158–arginine 175 match the Bipartite nuclear localization signal motif. A run of 2 repeats spans residues serine 162 to glutamine 169 and serine 170 to glutamine 177. The interval glutamine 177 to cysteine 183 is RNA binding.

Belongs to the orthohepadnavirus core antigen family. Homodimerizes, then multimerizes. Interacts with cytosol exposed regions of viral L glycoprotein present in the reticulum-to-Golgi compartment. Interacts with human FLNB. Phosphorylated form interacts with host importin alpha; this interaction depends on the exposure of the NLS, which itself depends upon genome maturation and/or phosphorylation of the capsid protein. Interacts with host NUP153. In terms of processing, phosphorylated by host SRPK1, SRPK2, and maybe protein kinase C or GAPDH. Phosphorylation is critical for pregenomic RNA packaging. Protein kinase C phosphorylation is stimulated by HBx protein and may play a role in transport of the viral genome to the nucleus at the late step during the viral replication cycle.

Its subcellular location is the virion. The protein resides in the host cytoplasm. Self assembles to form an icosahedral capsid. Most capsids appear to be large particles with an icosahedral symmetry of T=4 and consist of 240 copies of capsid protein, though a fraction forms smaller T=3 particles consisting of 180 capsid proteins. Entering capsids are transported along microtubules to the nucleus. Phosphorylation of the capsid is thought to induce exposure of nuclear localization signal in the C-terminal portion of the capsid protein that allows binding to the nuclear pore complex via the importin (karyopherin-) alpha and beta. Capsids are imported in intact form through the nuclear pore into the nuclear basket, where it probably binds NUP153. Only capsids that contain the mature viral genome can release the viral DNA and capsid protein into the nucleoplasm. Immature capsids get stuck in the basket. Capsids encapsulate the pre-genomic RNA and the P protein. Pre-genomic RNA is reverse-transcribed into DNA while the capsid is still in the cytoplasm. The capsid can then either be directed to the nucleus, providing more genomes for transcription, or bud through the endoplasmic reticulum to provide new virions. The polypeptide is Capsid protein (Homo sapiens (Human)).